Reading from the N-terminus, the 122-residue chain is MIQMQSTLDVACNSGARRVQCIKVLGGSHRRYAGIGDIIKVSVKEAIPRAKAKKGDVYNAVVVRTKKGVRRPDGSVIRFDRNAAVLLNNNLQPIGTRIFGPVTRELRNEQFMKIVSLAPEVL.

This sequence belongs to the universal ribosomal protein uL14 family. Part of the 50S ribosomal subunit. Forms a cluster with proteins L3 and L19. In the 70S ribosome, L14 and L19 interact and together make contacts with the 16S rRNA in bridges B5 and B8.

Its function is as follows. Binds to 23S rRNA. Forms part of two intersubunit bridges in the 70S ribosome. This Shewanella baltica (strain OS223) protein is Large ribosomal subunit protein uL14.